Reading from the N-terminus, the 238-residue chain is Leucine-rich repeat-containing protein 57 (238 aa).

8 LRR repeats span residues 39–60 (NLRTIDLSSNKIEVVPPMMGKF), 62–84 (LLKSLSLNNNRISRLPDELCKLK), 85–106 (KLETLHLNGNQISQLPADFVQL), 108–129 (ALKTLNLSGNRLKTLPAQLFKL), 131–152 (NLDVVDLSKNRIQAIPDEVSGL), 153–175 (QAIELNLNQNQISQISVNISHCP), 176–196 (RLKVLRLEENCLELSMLPPSI), and 201–221 (QISLLAVEGNLFEIKKLRDLE).

In Xenopus laevis (African clawed frog), this protein is Leucine-rich repeat-containing protein 57 (lrrc57).